Consider the following 397-residue polypeptide: Elongation factor Tu (397 aa).

Residues 10 to 206 (KPHVNIGTIG…AIDSYIPTPE (197 aa)) enclose the tr-type G domain. The segment at 19–26 (GHVDHGKT) is G1. 19 to 26 (GHVDHGKT) contacts GTP. Position 26 (threonine 26) interacts with Mg(2+). The G2 stretch occupies residues 60 to 64 (GITIN). The segment at 81 to 84 (DCPG) is G3. GTP-binding positions include 81–85 (DCPGH) and 136–139 (NKAD). The G4 stretch occupies residues 136 to 139 (NKAD). Residues 174-176 (SAL) are G5.

It belongs to the TRAFAC class translation factor GTPase superfamily. Classic translation factor GTPase family. EF-Tu/EF-1A subfamily. In terms of assembly, monomer.

It is found in the cytoplasm. It carries out the reaction GTP + H2O = GDP + phosphate + H(+). In terms of biological role, GTP hydrolase that promotes the GTP-dependent binding of aminoacyl-tRNA to the A-site of ribosomes during protein biosynthesis. The chain is Elongation factor Tu from Clostridium botulinum (strain ATCC 19397 / Type A).